Reading from the N-terminus, the 75-residue chain is DNA-directed RNA polymerase subunit omega (75 aa).

Belongs to the RNA polymerase subunit omega family. In terms of assembly, in cyanobacteria the RNAP catalytic core is composed of 2 alpha, 1 beta, 1 beta', 1 gamma and 1 omega subunit. When a sigma factor is associated with the core the holoenzyme is formed, which can initiate transcription.

It catalyses the reaction RNA(n) + a ribonucleoside 5'-triphosphate = RNA(n+1) + diphosphate. In terms of biological role, promotes RNA polymerase assembly. Latches the N- and C-terminal regions of the beta' subunit thereby facilitating its interaction with the beta and alpha subunits. In Prochlorococcus marinus (strain MIT 9313), this protein is DNA-directed RNA polymerase subunit omega.